A 373-amino-acid chain; its full sequence is Packaging protein 3 (373 aa).

The disordered stretch occupies residues 1–32 (MHPVLRQMRPQPRATTASAAVALSGSGEQEEP). An interaction with packaging protein 1 region spans residues 1 to 150 (MHPVLRQMRP…VTEERNFQKS (150 aa)). Phosphoserine; by host is present on residues serine 52 and serine 334.

This sequence belongs to the adenoviridae packaging protein 3 family. In terms of assembly, part of the genome packaging complex composed of packaging proteins 1, 2 and 3; this complex specifically binds to the packaging sequence on the left end of viral genomic DNA and performs packaging of the viral genome. Interacts with hexon-linking protein IIIa; this interaction is required to promote correct genome packaging. Post-translationally, cleaved at different sites by the viral protease during virion maturation.

It localises to the host nucleus. Involved in viral genome packaging through its interaction with packaging proteins 1 and 2. After proteolytic cleavage by adenovirus protease, L1 52/55k protein is removed from the capsid during viral maturation. This chain is Packaging protein 3, found in Homo sapiens (Human).